A 367-amino-acid chain; its full sequence is Probable butyrate kinase (367 aa).

The protein belongs to the acetokinase family.

The protein resides in the cytoplasm. The enzyme catalyses butanoate + ATP = butanoyl phosphate + ADP. This is Probable butyrate kinase from Bacillus cereus (strain G9842).